A 552-amino-acid polypeptide reads, in one-letter code: CTP synthase (552 aa).

The amidoligase domain stretch occupies residues 1 to 270 (MTKYVFVTGG…DRIICEELKL (270 aa)). Residue S13 coordinates CTP. A UTP-binding site is contributed by S13. ATP is bound by residues 14 to 19 (SLGKGI) and D71. The Mg(2+) site is built by D71 and E144. CTP is bound by residues 151–153 (DIE), 191–196 (KTKPTQ), and K227. UTP contacts are provided by residues 191–196 (KTKPTQ) and K227. One can recognise a Glutamine amidotransferase type-1 domain in the interval 295–547 (TIGMVGKYVD…VEAAFANKQA (253 aa)). Position 356 (G356) interacts with L-glutamine. The active-site Nucleophile; for glutamine hydrolysis is the C383. Residues 384–387 (LGMQ), E407, and R473 contribute to the L-glutamine site. Catalysis depends on residues H520 and E522.

It belongs to the CTP synthase family. In terms of assembly, homotetramer.

It carries out the reaction UTP + L-glutamine + ATP + H2O = CTP + L-glutamate + ADP + phosphate + 2 H(+). The enzyme catalyses L-glutamine + H2O = L-glutamate + NH4(+). It catalyses the reaction UTP + NH4(+) + ATP = CTP + ADP + phosphate + 2 H(+). It participates in pyrimidine metabolism; CTP biosynthesis via de novo pathway; CTP from UDP: step 2/2. Allosterically activated by GTP, when glutamine is the substrate; GTP has no effect on the reaction when ammonia is the substrate. The allosteric effector GTP functions by stabilizing the protein conformation that binds the tetrahedral intermediate(s) formed during glutamine hydrolysis. Inhibited by the product CTP, via allosteric rather than competitive inhibition. Its function is as follows. Catalyzes the ATP-dependent amination of UTP to CTP with either L-glutamine or ammonia as the source of nitrogen. Regulates intracellular CTP levels through interactions with the four ribonucleotide triphosphates. This is CTP synthase from Burkholderia ambifaria (strain ATCC BAA-244 / DSM 16087 / CCUG 44356 / LMG 19182 / AMMD) (Burkholderia cepacia (strain AMMD)).